The primary structure comprises 184 residues: NADH-quinone oxidoreductase subunit B (184 aa).

Residues C37, C38, C103, and C132 each contribute to the [4Fe-4S] cluster site.

Belongs to the complex I 20 kDa subunit family. As to quaternary structure, NDH-1 is composed of 14 different subunits. Subunits NuoB, C, D, E, F, and G constitute the peripheral sector of the complex. It depends on [4Fe-4S] cluster as a cofactor.

It is found in the cell membrane. The catalysed reaction is a quinone + NADH + 5 H(+)(in) = a quinol + NAD(+) + 4 H(+)(out). Functionally, NDH-1 shuttles electrons from NADH, via FMN and iron-sulfur (Fe-S) centers, to quinones in the respiratory chain. The immediate electron acceptor for the enzyme in this species is believed to be a menaquinone. Couples the redox reaction to proton translocation (for every two electrons transferred, four hydrogen ions are translocated across the cytoplasmic membrane), and thus conserves the redox energy in a proton gradient. In Mycobacteroides abscessus (strain ATCC 19977 / DSM 44196 / CCUG 20993 / CIP 104536 / JCM 13569 / NCTC 13031 / TMC 1543 / L948) (Mycobacterium abscessus), this protein is NADH-quinone oxidoreductase subunit B.